Reading from the N-terminus, the 884-residue chain is Protein P (884 aa).

Residues 1–184 are terminal protein domain (TP); sequence MHPFSRLFRN…GKPYSWEHRQ (184 aa). Residues 185–387 are spacer; the sequence is LVQHNGQQHK…YCIHHIVSSL (203 aa). Residues 299 to 345 are disordered; sequence RNSGHTTWFSSASNSNKSRSREKAYSSNSTSKRYSPPLNYEKSDFSS. A polymerase/reverse transcriptase domain (RT) region spans residues 388–729; it reads DDWGPCTVTG…YEELWPVVRQ (342 aa). Residues 398 to 639 enclose the Reverse transcriptase domain; it reads DVTIKSPRTP…NHLHFMGYVI (242 aa). Mg(2+)-binding residues include aspartate 470, aspartate 590, and aspartate 591.

It belongs to the hepadnaviridae P protein family.

It carries out the reaction DNA(n) + a 2'-deoxyribonucleoside 5'-triphosphate = DNA(n+1) + diphosphate. It catalyses the reaction Endonucleolytic cleavage to 5'-phosphomonoester.. Activated by host HSP70 and HSP40 in vitro to be able to bind the epsilon loop of the pgRNA. Because deletion of the RNase H region renders the protein partly chaperone-independent, the chaperones may be needed indirectly to relieve occlusion of the RNA-binding site by this domain. Inhibited by several reverse-transcriptase inhibitors: Lamivudine, Adefovir and Entecavir. Functionally, multifunctional enzyme that converts the viral RNA genome into dsDNA in viral cytoplasmic capsids. This enzyme displays a DNA polymerase activity that can copy either DNA or RNA templates, and a ribonuclease H (RNase H) activity that cleaves the RNA strand of RNA-DNA heteroduplexes in a partially processive 3'- to 5'-endonucleasic mode. Neo-synthesized pregenomic RNA (pgRNA) are encapsidated together with the P protein, and reverse-transcribed inside the nucleocapsid. Initiation of reverse-transcription occurs first by binding the epsilon loop on the pgRNA genome, and is initiated by protein priming, thereby the 5'-end of (-)DNA is covalently linked to P protein. Partial (+)DNA is synthesized from the (-)DNA template and generates the relaxed circular DNA (RC-DNA) genome. After budding and infection, the RC-DNA migrates in the nucleus, and is converted into a plasmid-like covalently closed circular DNA (cccDNA). The activity of P protein does not seem to be necessary for cccDNA generation, and is presumably released from (+)DNA by host nuclear DNA repair machinery. The sequence is that of Protein P from Woodchuck hepatitis B virus (isolate 7) (WHV).